Here is a 393-residue protein sequence, read N- to C-terminus: G protein-activated inward rectifier potassium channel 3 (393 aa).

Residues methionine 1–arginine 23 form a disordered region. Over methionine 1 to tryptophan 57 the chain is Cytoplasmic. The chain crosses the membrane as a helical span at residues arginine 58 to isoleucine 82. Residues alanine 83–glycine 106 are Extracellular-facing. Positions phenylalanine 107–glutamate 118 form an intramembrane region, helical; Pore-forming. Positions threonine 119–histidine 125 form an intramembrane region, pore-forming. The short motif at threonine 120–histidine 125 is the Selectivity filter element. Residues arginine 126–glutamate 134 lie on the Extracellular side of the membrane. A helical membrane pass occupies residues glycine 135 to cysteine 156. Residues methionine 157 to valine 393 are Cytoplasmic-facing. Residues lysine 360–valine 393 form a disordered region. The segment covering leucine 384–valine 393 has biased composition (pro residues). A PDZ-binding motif is present at residues glutamate 390–valine 393.

This sequence belongs to the inward rectifier-type potassium channel (TC 1.A.2.1) family. KCNJ9 subfamily. Associates with KCNJ3/GIRK1 to form a G-protein-activated heteromultimer pore-forming unit. Interacts (via PDZ-binding motif) with SNX27 (via PDZ domain); the interaction is required when endocytosed to prevent degradation in lysosomes and promote recycling to the plasma membrane. In terms of tissue distribution, expressed mainly in the brain, some expression in the skeletal muscle.

It is found in the membrane. It catalyses the reaction K(+)(in) = K(+)(out). Its function is as follows. Inward rectifier potassium channels are characterized by a greater tendency to allow potassium to flow into the cell rather than out of it. Their voltage dependence is regulated by the concentration of extracellular potassium; as external potassium is raised, the voltage range of the channel opening shifts to more positive voltages. The inward rectification is mainly due to the blockage of outward current by internal magnesium. This receptor is controlled by G proteins. Unable to produce channel activity when expressed alone. Forms a functional channel in association with KCNJ3/GIRK1. The polypeptide is G protein-activated inward rectifier potassium channel 3 (Kcnj9) (Mus musculus (Mouse)).